The following is a 376-amino-acid chain: Zinc finger CCCH domain-containing protein C337.12 (376 aa).

The stretch at 2–25 (NEQQLLENIASLAGAINQYKNEKE) forms a coiled coil. The disordered stretch occupies residues 60-95 (SKSTAASPPYVIPSTSSNADDANKEPEKQSTSDYVS). The span at 80-89 (DANKEPEKQS) shows a compositional bias: basic and acidic residues. The stretch at 105 to 140 (KKNILEHDLQARKANLESYRAKLEKEYKTLAENKIQ) forms a coiled coil. C3H1-type zinc fingers lie at residues 202 to 228 (SPSAVYCRYYNANGICGKGAACRFVHE), 229 to 256 (PTRKTICPKFLNGRCNKAEDCNLSHELD), 257 to 283 (PRRIPACRYFLLGKCNNPNCRYVHIHY), and 284 to 312 (SENAPICFEFAKYGFCELGTSCKNQHILQ). The interval 347–376 (SKTAGSINPEDSGSEIGSNSLESNLDFISV) is disordered. The segment covering 349–369 (TAGSINPEDSGSEIGSNSLES) has biased composition (polar residues).

Its subcellular location is the nucleus. In Schizosaccharomyces pombe (strain 972 / ATCC 24843) (Fission yeast), this protein is Zinc finger CCCH domain-containing protein C337.12.